Reading from the N-terminus, the 2614-residue chain is Talin-B (2614 aa).

The FERM domain occupies 85 to 369 (RPLKVRLMDE…GYIEILMKKR (285 aa)). The disordered stretch occupies residues 393-421 (RGQTSQATTSSSLSGYDGNGGREGQYSAP). Positions 395–406 (QTSQATTSSSLS) are enriched in low complexity. 2 coiled-coil regions span residues 1938 to 1965 (TQNIQEQVGKLAQDLKDSKNQLAEASGK) and 2033 to 2057 (NKAILDKSSQELEESIDSLANLVQS). The I/LWEQ domain maps to 2219–2460 (LLFAAGESLE…SIRKKEYSDQ (242 aa)). The segment at 2454 to 2557 (KKEYSDQTGN…AAPTAAAPNK (104 aa)) is disordered. Residues 2473-2487 (KPTTSISVGITPTKR) are compositionally biased toward polar residues. The segment covering 2517–2537 (KKPAPSQAPSSPVAPVSAPVS) has biased composition (low complexity). The span at 2538 to 2548 (KPSPKPAPKPA) shows a compositional bias: pro residues. The 62-residue stretch at 2553–2614 (AAPNKTYTLE…NNIKTKLGLF (62 aa)) folds into the HP domain.

It localises to the cytoplasm. The protein localises to the cytoskeleton. It is found in the cell cortex. Actin-binding protein required for multicellular morphogenesis. Substrate of pkgB and/or pkbA. This is Talin-B (talB) from Dictyostelium discoideum (Social amoeba).